The chain runs to 227 residues: GRF-interacting factor 1 (227 aa).

The span at 124-139 shows a compositional bias: low complexity; it reads ALSPLQQQQQQQAAAA. Disordered stretches follow at residues 124–160 and 188–227; these read ALSPLQQQQQQQAAAAHGQLGMGSGGTTSGFSILHGE and GGGGGGKEGSTSLSVDVRGANSGAQSGDGEYLKGTEEEGS. The segment covering 217–227 has biased composition (basic and acidic residues); it reads EYLKGTEEEGS.

It belongs to the SS18 family. Interacts with GRF4. In terms of tissue distribution, highly expressed in internodes, nodes, developing spikelets and developing anthers. Expressed at low levels in roots and mature glumes.

The protein resides in the nucleus. It localises to the cytoplasm. Its function is as follows. Transcription coactivator that plays a role in the regulation of meristematic function in leaves, stems and inflorescences. May regulate leaf size, length of stem internodes, and seed size by promoting cell expansion. Transcription coactivator that plays a role in the regulation of grain size. Component of a network formed by the microRNA396 (miRNA396), the GRFs and their interacting factors (GIFs) acting in the regulation of meristem function, at least partially through the control of cell proliferation. Component of the miRNA396c-GRF4-GIF1 regulatory module that plays an important role in grain size determination. The sequence is that of GRF-interacting factor 1 from Oryza sativa subsp. japonica (Rice).